Reading from the N-terminus, the 180-residue chain is Bifunctional protein PyrR 1 (180 aa).

Substrate-binding positions include 39 to 40 (TR), 103 to 111 (DDVLFTGRT), R136, and V160. Positions 99 to 111 (VILVDDVLFTGRT) match the PRPP-binding motif.

The protein belongs to the purine/pyrimidine phosphoribosyltransferase family. PyrR subfamily. Homodimer and homohexamer; in equilibrium.

The enzyme catalyses UMP + diphosphate = 5-phospho-alpha-D-ribose 1-diphosphate + uracil. Its function is as follows. Regulates transcriptional attenuation of the pyrimidine nucleotide (pyr) operon by binding in a uridine-dependent manner to specific sites on pyr mRNA. This disrupts an antiterminator hairpin in the RNA and favors formation of a downstream transcription terminator, leading to a reduced expression of downstream genes. Also displays a weak uracil phosphoribosyltransferase activity which is not physiologically significant. The polypeptide is Bifunctional protein PyrR 1 (pyrR1) (Lactiplantibacillus plantarum (strain ATCC BAA-793 / NCIMB 8826 / WCFS1) (Lactobacillus plantarum)).